Consider the following 468-residue polypeptide: Hexokinase (468 aa).

Positions 10-466 (AKQLAELEVV…SGKGAALIAD (457 aa)) constitute a Hexokinase domain. A hexokinase small subdomain region spans residues 74–225 (TGAEVGEAYA…NVPAVCKAIV (152 aa)). ATP is bound at residue 85 to 90 (DFGGST). The segment at 163–189 (PVGFTFSFPCAQAALNSSFLIEWTKGF) is glucose-binding. The segment at 226 to 455 (NDTVGTLVSC…KNIHYCIADD (230 aa)) is hexokinase large subdomain.

Belongs to the hexokinase family.

The catalysed reaction is a D-hexose + ATP = a D-hexose 6-phosphate + ADP + H(+). The enzyme catalyses D-mannose + ATP = D-mannose 6-phosphate + ADP + H(+). It catalyses the reaction D-fructose + ATP = D-fructose 6-phosphate + ADP + H(+). It carries out the reaction D-glucose + ATP = D-glucose 6-phosphate + ADP + H(+). Its pathway is carbohydrate metabolism; hexose metabolism. The protein operates within carbohydrate degradation; glycolysis; D-glyceraldehyde 3-phosphate and glycerone phosphate from D-glucose: step 1/4. Its function is as follows. Catalyzes the phosphorylation of various hexoses to hexose 6-phosphate. The sequence is that of Hexokinase (HXK) from Toxoplasma gondii.